A 146-amino-acid chain; its full sequence is Ribosome-binding factor A (146 aa).

The disordered stretch occupies residues 122-146 (QQQFGSVDDVTENDIDEADDTEGKA). The segment covering 130 to 146 (DVTENDIDEADDTEGKA) has biased composition (acidic residues).

Belongs to the RbfA family. Monomer. Binds 30S ribosomal subunits, but not 50S ribosomal subunits or 70S ribosomes.

It localises to the cytoplasm. One of several proteins that assist in the late maturation steps of the functional core of the 30S ribosomal subunit. Associates with free 30S ribosomal subunits (but not with 30S subunits that are part of 70S ribosomes or polysomes). Required for efficient processing of 16S rRNA. May interact with the 5'-terminal helix region of 16S rRNA. In Shewanella sp. (strain MR-7), this protein is Ribosome-binding factor A.